A 122-amino-acid polypeptide reads, in one-letter code: Large ribosomal subunit protein uL14 (122 aa).

This sequence belongs to the universal ribosomal protein uL14 family. As to quaternary structure, part of the 50S ribosomal subunit. Forms a cluster with proteins L3 and L19. In the 70S ribosome, L14 and L19 interact and together make contacts with the 16S rRNA in bridges B5 and B8.

Functionally, binds to 23S rRNA. Forms part of two intersubunit bridges in the 70S ribosome. This is Large ribosomal subunit protein uL14 from Thermosipho melanesiensis (strain DSM 12029 / CIP 104789 / BI429).